The sequence spans 344 residues: tRNA N6-adenosine threonylcarbamoyltransferase (344 aa).

2 residues coordinate Fe cation: His110 and His114. Residues 132–136 (LVSGG), Asp166, Gly179, Asp183, and Asn278 contribute to the substrate site. Fe cation is bound at residue Asp306.

It belongs to the KAE1 / TsaD family. The cofactor is Fe(2+).

The protein localises to the cytoplasm. It catalyses the reaction L-threonylcarbamoyladenylate + adenosine(37) in tRNA = N(6)-L-threonylcarbamoyladenosine(37) in tRNA + AMP + H(+). Required for the formation of a threonylcarbamoyl group on adenosine at position 37 (t(6)A37) in tRNAs that read codons beginning with adenine. Is involved in the transfer of the threonylcarbamoyl moiety of threonylcarbamoyl-AMP (TC-AMP) to the N6 group of A37, together with TsaE and TsaB. TsaD likely plays a direct catalytic role in this reaction. The chain is tRNA N6-adenosine threonylcarbamoyltransferase from Nocardia farcinica (strain IFM 10152).